The primary structure comprises 400 residues: uncharacterized protein (400 aa).

A compositionally biased stretch (basic and acidic residues) spans 112-126 (SESTAQIEKKPRKPL). The disordered stretch occupies residues 112–151 (SESTAQIEKKPRKPLDSVGLLEGDRNKRKKSPQMNDFNIK).

This is an uncharacterized protein from Homo sapiens (Human).